A 216-amino-acid polypeptide reads, in one-letter code: Large ribosomal subunit protein uL1 (216 aa).

It belongs to the universal ribosomal protein uL1 family. In terms of assembly, part of the 50S ribosomal subunit.

In terms of biological role, binds directly to 23S rRNA. Probably involved in E site tRNA release. Functionally, protein L1 is also a translational repressor protein, it controls the translation of its operon by binding to its mRNA. The sequence is that of Large ribosomal subunit protein uL1 from Thermococcus kodakarensis (strain ATCC BAA-918 / JCM 12380 / KOD1) (Pyrococcus kodakaraensis (strain KOD1)).